Reading from the N-terminus, the 236-residue chain is Sperm flagellar protein 1 (236 aa).

Residues 7–112 (EEALHQLYLW…VLIPLRQRLE (106 aa)) form the Calponin-homology (CH) domain. The tract at residues 115-176 (QRRRKQGAGS…PRPPAYNRAL (62 aa)) is disordered. The interval 183 to 236 (VLQIAEKEQELLASQETVQVLQMKVRRLEHLLQLKNVRIEDLSRRLQQAERKQR) is essential for homodimerization and microtubule bundling activity.

In terms of assembly, homodimer. Interacts with actin, TJP1, CGN and CDH1. Expressed in the intestinal epithelial cells (at protein level).

The protein resides in the cytoplasm. The protein localises to the cell projection. It localises to the cilium. Its subcellular location is the flagellum. It is found in the cytoskeleton. The protein resides in the cilium axoneme. The protein localises to the apical cell membrane. It localises to the basolateral cell membrane. Its subcellular location is the stress fiber. It is found in the microvillus. The protein resides in the lamellipodium. The protein localises to the filopodium. In terms of biological role, microtubule-associated protein involved in the stabilization of microtubules along the axis of migration during radial intercalation. Promotes the establishment and stabilization of an axis of microtubules required for the active migration of cells into the outer epithelium. Microtubule-associated protein that promotes microtubule bundling and stabilizes microtubules against depolymerization in response to cold shock. Essential for ciliary central apparatus formation which requires both its microtubule-binding and bundling activities and for ciliary localization of HYDIN and SPAG6 in ependymal cilia. Binds actin in intestinal epithelial cells (IECs), essential for IECs survival and contributes to formation of filopodia and lamellipodia in migrating IECs. Regulates planar cell polarity signaling pathway and asymmetric microtubule accumulation in ciliated epithelia. The chain is Sperm flagellar protein 1 (SPEF1) from Homo sapiens (Human).